Here is a 109-residue protein sequence, read N- to C-terminus: Protein phosphatase 1 regulatory subunit 1C (109 aa).

The segment at 25-109 (AEQIRKRRPT…TNEREEQRDH (85 aa)) is disordered. Residues 45–54 (NPPEIDDKRG) are compositionally biased toward basic and acidic residues. Over residues 55-75 (PNTQGELQNASPKQRKQSVYT) the composition is skewed to polar residues. Positions 100-109 (TNEREEQRDH) are enriched in basic and acidic residues.

It belongs to the protein phosphatase inhibitor 1 family.

The protein resides in the cytoplasm. May increase cell susceptibility to TNF-induced apoptosis. This chain is Protein phosphatase 1 regulatory subunit 1C (PPP1R1C), found in Homo sapiens (Human).